Reading from the N-terminus, the 223-residue chain is Ubiquitin carboxyl-terminal hydrolase isozyme L1 (223 aa).

An N-acetylmethionine modification is found at Met-1. The UCH catalytic domain occupies Gln-2 to Lys-221. An interaction with ubiquitin region spans residues Pro-5 to Pro-10. Cys-90 acts as the Nucleophile in catalysis. Phosphoserine is present on Ser-125. Residue His-161 is the Proton donor of the active site. An interaction with ubiquitin region spans residues Glu-211–Ala-216. Cys-220 carries the S-farnesyl cysteine lipid modification. The propeptide at Lys-221–Ala-223 is removed in mature form.

Belongs to the peptidase C12 family. As to quaternary structure, monomer. Homodimer. Interacts with SNCA. Interacts with COPS5. In terms of processing, O-glycosylated. In terms of tissue distribution, found in neuronal cell bodies and processes throughout the neocortex (at protein level). Expressed in neurons and cells of the diffuse neuroendocrine system and their tumors. Weakly expressed in ovary. Down-regulated in brains from Parkinson disease and Alzheimer disease patients.

It is found in the cytoplasm. The protein resides in the endoplasmic reticulum membrane. It catalyses the reaction Thiol-dependent hydrolysis of ester, thioester, amide, peptide and isopeptide bonds formed by the C-terminal Gly of ubiquitin (a 76-residue protein attached to proteins as an intracellular targeting signal).. Deubiquitinase that plays a role in the regulation of several processes such as maintenance of synaptic function, cardiac function, inflammatory response or osteoclastogenesis. Abrogates the ubiquitination of multiple proteins including WWTR1/TAZ, EGFR, HIF1A and beta-site amyloid precursor protein cleaving enzyme 1/BACE1. In addition, recognizes and hydrolyzes a peptide bond at the C-terminal glycine of ubiquitin to maintain a stable pool of monoubiquitin that is a key requirement for the ubiquitin-proteasome and the autophagy-lysosome pathways. Regulates amyloid precursor protein/APP processing by promoting BACE1 degradation resulting in decreased amyloid beta production. Plays a role in the immune response by regulating the ability of MHC I molecules to reach cross-presentation compartments competent for generating Ag-MHC I complexes. Mediates the 'Lys-48'-linked deubiquitination of the transcriptional coactivator WWTR1/TAZ leading to its stabilization and inhibition of osteoclastogenesis. Deubiquitinates and stabilizes epidermal growth factor receptor EGFR to prevent its degradation and to activate its downstream mediators. Modulates oxidative activity in skeletal muscle by regulating key mitochondrial oxidative proteins. Enhances the activity of hypoxia-inducible factor 1-alpha/HIF1A by abrogateing its VHL E3 ligase-mediated ubiquitination and consequently inhibiting its degradation. The chain is Ubiquitin carboxyl-terminal hydrolase isozyme L1 (UCHL1) from Homo sapiens (Human).